The primary structure comprises 744 residues: MEQTYQYGWIIPFLPLPVPMLIGLGLLLFPTATKSLRRMWAFQSVLLLSIVMIFSMNLSIQQINSSSVYQYVWSWIINNDFSLEFGYLIDPLTSIMSILITTVGIMVLSYSDNYMSHDHGYLRFFAYMSFFSTSMLGLVTSSNLIQIYIFWELVGMCSYLLIGFWFTRPLAANACQKAFVTNRVGDFGLLLGILGIYWITGSFEFRDLFQIFNSLISNNEVNFLFVTFCALLLFTGAIAKSAQFPLHVWLPDAMEGPTPISALIHAATMVAAGIFLIARLLPLFIVIPHIMNFISLIGIITLFLGATLALAQKDIKRGLAYSTMSQLGYMVLALGMGSYRSALFHLITHAYSKALLFLGSGSVIHSMETLVGYSPQKSQNMGLMGGLTKHVPITKTAFLLGTLSLCGIPPLACFWSKDEILNDSWLYSPIFAIIAWSTAGLTAFYMCRIYLLSFEGHLNAHFQNYSGKKNTPLSSIYIWGKEASEISKKNFCELILLKMKRTECPSFFSKKGCKLDEKVRNMIQPFLSISYLGNNKTYFYPYESDNTMLFPILILGLFTLFIGFLGIPSNHEGVDLDILSKWLTPSINLLHQNTNTSLDLYEFSKDSIFSVSIASLGIFIAFFLYKPVYSSFQILDLINLFVKRGPKRIFSDKIKKGIYDWSSNRAYIDPFYTTFLTVGMRKLAELTHFFDRRIIDGIPNGVGLMIFFVAEGIKSLGGGRISSYLFFYLSHLSFFLLIYYFLNF.

Helical transmembrane passes span 9–29 (WIIP…LLLF), 40–60 (WAFQ…NLSI), 88–108 (LIDP…IMVL), 125–145 (FAYM…SNLI), 147–167 (IYIF…FWFT), 185–205 (GDFG…SFEF), 219–239 (NEVN…GAIA), 258–278 (TPIS…FLIA), 290–312 (IMNF…ALAQ), 327–347 (LGYM…FHLI), 354–374 (ALLF…VGYS), 396–416 (TAFL…CFWS), 425–445 (WLYS…TAFY), 548–568 (MLFP…LGIP), 608–628 (IFSV…YKPV), and 724–744 (YLFF…FLNF).

It belongs to the complex I subunit 5 family. As to quaternary structure, NDH is composed of at least 16 different subunits, 5 of which are encoded in the nucleus.

The protein resides in the plastid. The protein localises to the chloroplast thylakoid membrane. It carries out the reaction a plastoquinone + NADH + (n+1) H(+)(in) = a plastoquinol + NAD(+) + n H(+)(out). The enzyme catalyses a plastoquinone + NADPH + (n+1) H(+)(in) = a plastoquinol + NADP(+) + n H(+)(out). NDH shuttles electrons from NAD(P)H:plastoquinone, via FMN and iron-sulfur (Fe-S) centers, to quinones in the photosynthetic chain and possibly in a chloroplast respiratory chain. The immediate electron acceptor for the enzyme in this species is believed to be plastoquinone. Couples the redox reaction to proton translocation, and thus conserves the redox energy in a proton gradient. This chain is NAD(P)H-quinone oxidoreductase subunit 5, chloroplastic (ndhF), found in Dampiera diversifolia (Blue dampiera).